Consider the following 171-residue polypeptide: Non-specific lipid transfer protein GPI-anchored 19 (171 aa).

The N-terminal stretch at 1–18 (MILAILALVIATFLYGGA) is a signal peptide. Intrachain disulfides connect Cys25–Cys66, Cys35–Cys50, Cys51–Cys93, and Cys64–Cys103. N-linked (GlcNAc...) asparagine glycans are attached at residues Asn72 and Asn82. Residues 113–149 (LPANTPVGSPRSAPSPSGTTSPANTPSGSKKFPLSNE) are disordered. Positions 118–141 (PVGSPRSAPSPSGTTSPANTPSGS) are enriched in low complexity. Residue Ser147 is the site of GPI-anchor amidated serine attachment. Asn148 carries N-linked (GlcNAc...) asparagine glycosylation. Positions 148–171 (NESSSKSNVIILSFVSIALVLAII) are cleaved as a propeptide — removed in mature form.

It belongs to the plant LTP family.

The protein resides in the cell membrane. Probable lipid transfer protein. The protein is Non-specific lipid transfer protein GPI-anchored 19 of Arabidopsis thaliana (Mouse-ear cress).